The primary structure comprises 502 residues: MEAAGFLYYSPDPQGRQQKQHGHHGHFLAQPNAAYTISASPQLLAPTPIHFPSQLVLGGRGVPLTITPSASPSLMEPYRDMCSESATTDLLFNPATPPLTHSAVSTPSLSYAMPTPISNHGWSSEEPVIATVSLSDIHLPSTPADYFPPGLVAPSILKSNASPPPSISLNDLHCPALSPCSSQDSFNESDCCDPRELTIQSPTPVEIKPDILFPPMASLSGDDDQFLFGGNVESFLPLASKVTPYMAGDYNEELSDLGDSEDDFIQNFSESVFSNKRMRFDDDSENEQLPSPPMSTSSSRQGSVAPIKVLKRKLLKVKKEDTPEEMSEEQRLRSFKFGSIDSACSSEPSSPCSEKHSHMVGHPISPHVIRRGRKQSLTEDPSKTFVCHLCTRRFRRQEHLKRHFRSLHTEDKPFACGECGKKFSRSDNLTQHSRIHGTGAVVLGVLTEGEVPVLGSQFMEDESMHSPQPFIVVDSMTAASGEIKDKSSDDKKSRKKRKRSDE.

2 consecutive C2H2-type zinc fingers follow at residues 385 to 408 (FVCH…RSLH) and 414 to 436 (FACG…SRIH).

Its subcellular location is the nucleus. Key downstream transcription factor in the HOG1-MAPK pathway. Plays crucial roles in the regulation of growth, conidiation, trap development and fatty acid metabolism. Negatively regulates secondary metabolism such as arthrobotrisins biosynthesis.Also regulates autophagy and endocytosis. In Arthrobotrys oligospora (strain ATCC 24927 / CBS 115.81 / DSM 1491) (Nematode-trapping fungus), this protein is C2H2-type transcription factor MSN2.